The chain runs to 308 residues: Oxygen-dependent coproporphyrinogen-III oxidase (308 aa).

Residue serine 100 coordinates substrate. Histidine 104 and histidine 114 together coordinate a divalent metal cation. Catalysis depends on histidine 114, which acts as the Proton donor. Substrate is bound at residue 116–118; it reads NFR. A divalent metal cation contacts are provided by histidine 153 and histidine 183. The interval 248 to 283 is important for dimerization; sequence YVEFNLVFDRGTIFGLQSGGRTESILSSMPPMATWK. 266-268 is a substrate binding site; that stretch reads GGR.

This sequence belongs to the aerobic coproporphyrinogen-III oxidase family. In terms of assembly, homodimer. A divalent metal cation serves as cofactor.

The protein localises to the cytoplasm. It catalyses the reaction coproporphyrinogen III + O2 + 2 H(+) = protoporphyrinogen IX + 2 CO2 + 2 H2O. It participates in porphyrin-containing compound metabolism; protoporphyrin-IX biosynthesis; protoporphyrinogen-IX from coproporphyrinogen-III (O2 route): step 1/1. Functionally, involved in the heme biosynthesis. Catalyzes the aerobic oxidative decarboxylation of propionate groups of rings A and B of coproporphyrinogen-III to yield the vinyl groups in protoporphyrinogen-IX. The protein is Oxygen-dependent coproporphyrinogen-III oxidase of Francisella philomiragia subsp. philomiragia (strain ATCC 25017 / CCUG 19701 / FSC 153 / O#319-036).